The chain runs to 86 residues: MEKLTILILVATVLLAIQVLGQGEGEKPPKEWVQQYAAKRLWALMKGPRQCTPKDAPCDDNNQCCSGLECKCFNMPDCQSGSTCRV.

Positions 1 to 23 (MEKLTILILVATVLLAIQVLGQG) are cleaved as a signal peptide. Positions 24-49 (EGEKPPKEWVQQYAAKRLWALMKGPR) are excised as a propeptide. Position 50 is a pyrrolidone carboxylic acid (glutamine 50).

It belongs to the conotoxin O2 superfamily. In terms of processing, contains 4 disulfide bonds. As to expression, expressed by the venom duct.

Its subcellular location is the secreted. This is Conotoxin Ec15a from Conus emaciatus (False virgin cone).